Here is a 542-residue protein sequence, read N- to C-terminus: Chaperonin GroEL 3 (542 aa).

Residues 29-32 (TLGP), 86-90 (DGTTT), Gly-413, 477-479 (NAA), and Asp-493 contribute to the ATP site.

The protein belongs to the chaperonin (HSP60) family. Forms a cylinder of 14 subunits composed of two heptameric rings stacked back-to-back. Interacts with the co-chaperonin GroES.

It is found in the cytoplasm. It catalyses the reaction ATP + H2O + a folded polypeptide = ADP + phosphate + an unfolded polypeptide.. Together with its co-chaperonin GroES, plays an essential role in assisting protein folding. The GroEL-GroES system forms a nano-cage that allows encapsulation of the non-native substrate proteins and provides a physical environment optimized to promote and accelerate protein folding. The chain is Chaperonin GroEL 3 from Frankia alni (strain DSM 45986 / CECT 9034 / ACN14a).